A 77-amino-acid chain; its full sequence is Conotoxin ArMKLT2-0251 (77 aa).

The N-terminal stretch at 1–22 is a signal peptide; the sequence is MKLTCVLIVAVLILTACQLIAA. The propeptide occupies 23-46; that stretch reads DDSRDLKRFSRRKMRDGMLNTKNM. Position 49 is a pyrrolidone carboxylic acid (glutamine 49). Disulfide bonds link cysteine 50–cysteine 65, cysteine 57–cysteine 68, and cysteine 64–cysteine 73.

Belongs to the conotoxin O1 superfamily. In terms of tissue distribution, expressed by the venom duct.

The protein resides in the secreted. The protein is Conotoxin ArMKLT2-0251 of Conus arenatus (Sand-dusted cone).